A 301-amino-acid chain; its full sequence is Tetratricopeptide repeat domain-containing protein PYG7, chloroplastic (301 aa).

A chloroplast-targeting transit peptide spans 1-61 (MFESNMVLQT…FHDYVFAEIS (61 aa)). Transmembrane regions (helical) follow at residues 82–102 (TFLL…AAAA) and 121–141 (IQLS…FYVI). TPR repeat units follow at residues 168-201 (ATEL…WDGD), 206-239 (AQVY…QPGY), and 240-273 (VTAW…DPNN).

Interacts with PSA3.

Its subcellular location is the plastid. It is found in the chloroplast thylakoid membrane. Its function is as follows. Nuclear genome-encoded factor required for the accumulation of photosystem I (PSI). Functions as a PSI biogenesis factor. Cooperates with PSA3 to promote the stable assembly of PSI in the thylakoid membrane. May target primarily the PsaC subunit. This is Tetratricopeptide repeat domain-containing protein PYG7, chloroplastic from Arabidopsis thaliana (Mouse-ear cress).